Reading from the N-terminus, the 603-residue chain is T-cell surface protein tactile (603 aa).

The first 21 residues, Met-1 to Gly-21, serve as a signal peptide directing secretion. Over Ala-22–Met-537 the chain is Extracellular. Ig-like V-type domains lie at Glu-24–Val-132 and Pro-139–Val-245. Asn-43, Asn-108, Asn-146, Asn-154, Asn-164, Asn-197, Asn-259, Asn-307, Asn-324, Asn-331, Asn-349, Asn-371, Asn-416, Asn-425, and Asn-437 each carry an N-linked (GlcNAc...) asparagine glycan. A disulfide bond links Cys-46 and Cys-119. A disulfide bond links Cys-161 and Cys-229. Residues Pro-251 to Thr-356 form the Ig-like C2-type domain. Residues Cys-272 and Cys-336 are joined by a disulfide bond. Disordered regions lie at residues Leu-359–Pro-383 and Glu-403–Thr-482. A compositionally biased stretch (polar residues) spans Pro-412–Lys-436. Over residues Ser-438–Arg-450 the composition is skewed to low complexity. Asn-515 carries an N-linked (GlcNAc...) asparagine glycan. A helical transmembrane segment spans residues Ser-538–Val-558. The Cytoplasmic segment spans residues Arg-559 to Leu-603.

In terms of assembly, homodimer; disulfide-linked. Interacts with PVR.

It localises to the membrane. In terms of biological role, may be involved in adhesive interactions of activated T and NK cells during the late phase of the immune response. Promotes NK cell-target adhesion by interacting with PVR present on target cells. May function at a time after T and NK cells have penetrated the endothelium using integrins and selectins, when they are actively engaging diseased cells and moving within areas of inflammation. This Rattus norvegicus (Rat) protein is T-cell surface protein tactile (Cd96).